The following is a 352-amino-acid chain: Dysbindin (352 aa).

Phosphoserine is present on Ser11. Positions Glu88–Glu176 form a coiled coil. The segment at Leu173–Ala325 is dysbindin. A Nuclear export signal motif is present at residues Leu243–Leu256. The disordered stretch occupies residues Ser267–Ile352. Over residues Ser274–Ile285 the composition is skewed to polar residues. Residues Pro286–Ala301 are compositionally biased toward low complexity. A phosphoserine mark is found at Ser315, Ser340, and Ser343.

The protein belongs to the dysbindin family. In terms of assembly, interacts with AP3M1 and TRIM32. Interacts (isoform 1 and isoform 2 only) with the DNA-dependent protein kinase complex DNA-PK; the interaction phosphorylates DTNBP1 in vitro. Interacts directly in this complex with XRCC5 and XRCC6. Interacts with XPO1; the interaction exports DTNBP1 out of the nucleus. Component of the biogenesis of lysosome-related organelles complex 1 (BLOC-1) composed of BLOC1S1, BLOC1S2, BLOC1S3, BLOC1S4, BLOC1S5, BLOC1S6, DTNBP1/BLOC1S7 and SNAPIN/BLOC1S8. The BLOC-1 complex associates with the AP-3 protein complex and membrane protein cargos. This BLOC-1 complex also associates with the BLOC-2 complex in endosomes. Binds to DTNA and DTNB but may not be a physiological binding partner. Interacts (via its coiled coil domain) with KXD1. Interacts with AP3B2, BLOC1S5, BLOC1S6, CMYA5, PI4K2, RNF151 and SNAPIN/BLOC1S8. Interacts with XPO1; the interaction exports DTNBP1 out of the nucleus. Ubiquitinated by TRIM32. Ubiquitination leads to DTNBP1 degradation. Detected in brain, in hippocampus and dentate gyrus neurons. Detected at axon bundles and axon terminals, notably in the cerebellum and hippocampus. Detected in neuropil in hippocampus, lateral septum, basal ganglia and substantia nigra. Highly expressed in pyramidal cells of hippocampus CA2 and CA3. Detected at the heart and skeletal muscle sarcolemma (at protein level). Ubiquitously expressed. The highest expression is observed in testis, liver, kidney, brain, heart and lung. Expressed at lower levels in stomach and small intestine.

Its subcellular location is the cytoplasm. It localises to the cytoplasmic vesicle membrane. The protein resides in the endosome membrane. It is found in the melanosome membrane. The protein localises to the postsynaptic density. Its subcellular location is the endoplasmic reticulum. It localises to the nucleus. The protein resides in the cytoplasmic vesicle. It is found in the secretory vesicle. The protein localises to the synaptic vesicle membrane. Its subcellular location is the postsynaptic cell membrane. In terms of biological role, component of the BLOC-1 complex, a complex that is required for normal biogenesis of lysosome-related organelles (LRO), such as platelet dense granules and melanosomes. In concert with the AP-3 complex, the BLOC-1 complex is required to target membrane protein cargos into vesicles assembled at cell bodies for delivery into neurites and nerve terminals. The BLOC-1 complex, in association with SNARE proteins, is also proposed to be involved in neurite extension. Associates with the BLOC-2 complex to facilitate the transport of TYRP1 independent of AP-3 function. Plays a role in synaptic vesicle trafficking and in neurotransmitter release. Plays a role in the regulation of cell surface exposure of DRD2. May play a role in actin cytoskeleton reorganization and neurite outgrowth. May modulate MAPK8 phosphorylation. Appears to promote neuronal transmission and viability through regulating the expression of SNAP25 and SYN1, modulating PI3-kinase-Akt signaling and influencing glutamatergic release. Regulates the expression of SYN1 through binding to its promoter. Modulates prefrontal cortical activity via the dopamine/D2 pathway. The sequence is that of Dysbindin (Dtnbp1) from Mus musculus (Mouse).